A 384-amino-acid polypeptide reads, in one-letter code: Carbamoyl phosphate synthase small chain (384 aa).

A CPSase region spans residues 1–192 (MIKKIPAILV…LADRNREKIY (192 aa)). The L-glutamine site is built by S51, G244, and G246. The Glutamine amidotransferase type-1 domain occupies 196 to 382 (KVIVIDFGVK…IEIMKQFRKE (187 aa)). Residue C272 is the Nucleophile of the active site. L-glutamine-binding residues include M273, Q276, N312, G314, and F315. Active-site residues include H355 and E357.

Belongs to the CarA family. In terms of assembly, composed of two chains; the small (or glutamine) chain promotes the hydrolysis of glutamine to ammonia, which is used by the large (or ammonia) chain to synthesize carbamoyl phosphate. Tetramer of heterodimers (alpha,beta)4.

The protein resides in the plastid. The protein localises to the chloroplast. It catalyses the reaction hydrogencarbonate + L-glutamine + 2 ATP + H2O = carbamoyl phosphate + L-glutamate + 2 ADP + phosphate + 2 H(+). The catalysed reaction is L-glutamine + H2O = L-glutamate + NH4(+). The protein operates within amino-acid biosynthesis; L-arginine biosynthesis; carbamoyl phosphate from bicarbonate: step 1/1. It functions in the pathway pyrimidine metabolism; UMP biosynthesis via de novo pathway; (S)-dihydroorotate from bicarbonate: step 1/3. Small subunit of the glutamine-dependent carbamoyl phosphate synthetase (CPSase). CPSase catalyzes the formation of carbamoyl phosphate from the ammonia moiety of glutamine, carbonate, and phosphate donated by ATP, constituting the first step of 2 biosynthetic pathways, one leading to arginine and/or urea and the other to pyrimidine nucleotides. The small subunit (glutamine amidotransferase) binds and cleaves glutamine to supply the large subunit with the substrate ammonia. This chain is Carbamoyl phosphate synthase small chain, found in Porphyra purpurea (Red seaweed).